A 414-amino-acid polypeptide reads, in one-letter code: BICD family-like cargo adapter 2 (414 aa).

Residues 34-341 (GQALLEKNEE…DALNQQLLNT (308 aa)) adopt a coiled-coil conformation. The segment covering 372 to 384 (QEKEKENNKERTG) has biased composition (basic and acidic residues). The tract at residues 372-399 (QEKEKENNKERTGFQRGTRTTKSLRLRG) is disordered.

The chain is BICD family-like cargo adapter 2 (bicdl2) from Danio rerio (Zebrafish).